The primary structure comprises 259 residues: Triosephosphate isomerase (259 aa).

Residue 10-12 (NWK) participates in substrate binding. Histidine 102 serves as the catalytic Electrophile. Glutamate 174 functions as the Proton acceptor in the catalytic mechanism. Substrate-binding positions include glycine 180, serine 220, and 241 to 242 (GG).

The protein belongs to the triosephosphate isomerase family. Homodimer.

The protein resides in the cytoplasm. The catalysed reaction is D-glyceraldehyde 3-phosphate = dihydroxyacetone phosphate. It functions in the pathway carbohydrate biosynthesis; gluconeogenesis. The protein operates within carbohydrate degradation; glycolysis; D-glyceraldehyde 3-phosphate from glycerone phosphate: step 1/1. Its function is as follows. Involved in the gluconeogenesis. Catalyzes stereospecifically the conversion of dihydroxyacetone phosphate (DHAP) to D-glyceraldehyde-3-phosphate (G3P). This chain is Triosephosphate isomerase, found in Cutibacterium acnes (strain DSM 16379 / KPA171202) (Propionibacterium acnes).